The primary structure comprises 343 residues: Methionine import ATP-binding protein MetN 1 (343 aa).

The ABC transporter domain occupies 2 to 241 (IKLSNITKVF…PKTPLAQKFI (240 aa)). 38–45 (GASGAGKS) provides a ligand contact to ATP.

This sequence belongs to the ABC transporter superfamily. Methionine importer (TC 3.A.1.24) family. The complex is composed of two ATP-binding proteins (MetN), two transmembrane proteins (MetI) and a solute-binding protein (MetQ).

The protein localises to the cell inner membrane. The catalysed reaction is L-methionine(out) + ATP + H2O = L-methionine(in) + ADP + phosphate + H(+). It carries out the reaction D-methionine(out) + ATP + H2O = D-methionine(in) + ADP + phosphate + H(+). Part of the ABC transporter complex MetNIQ involved in methionine import. Responsible for energy coupling to the transport system. In Salmonella paratyphi A (strain ATCC 9150 / SARB42), this protein is Methionine import ATP-binding protein MetN 1.